Consider the following 800-residue polypeptide: Phenylalanine--tRNA ligase beta subunit (800 aa).

Residues 39–154 (TKDIKNLVVG…ESQVPGTDAL (116 aa)) form the tRNA-binding domain. The 76-residue stretch at 408–483 (AFITPIDITA…RIYGYDDIPS (76 aa)) folds into the B5 domain. Residues Asp461, Asp467, Glu470, and Glu471 each contribute to the Mg(2+) site. Residues 708–800 (PRFPGMSRDI…ALIEQGAVIR (93 aa)) enclose the FDX-ACB domain.

Belongs to the phenylalanyl-tRNA synthetase beta subunit family. Type 1 subfamily. In terms of assembly, tetramer of two alpha and two beta subunits. Requires Mg(2+) as cofactor.

The protein resides in the cytoplasm. The catalysed reaction is tRNA(Phe) + L-phenylalanine + ATP = L-phenylalanyl-tRNA(Phe) + AMP + diphosphate + H(+). In Staphylococcus aureus (strain Mu50 / ATCC 700699), this protein is Phenylalanine--tRNA ligase beta subunit.